A 467-amino-acid chain; its full sequence is Matrix metalloproteinase-18 (467 aa).

The N-terminal stretch at 1-17 (MNSLLLKLLLCVAITAA) is a signal peptide. The propeptide occupies 18–99 (FPADKQDEPP…PRCGVYDVGQ (82 aa)). Residues 90-97 (PRCGVYDV) carry the Cysteine switch motif. 2 residues coordinate Zn(2+): C92 and H218. Residue E219 is part of the active site. Zn(2+)-binding residues include H222 and H228. 4 Hemopexin repeats span residues 277-326 (PSRC…WPSL), 327-373 (PTNI…GFPK), 375-423 (VKRI…FPGI), and 424-467 (PDKI…WLGC). C280 and C467 are disulfide-bonded.

This sequence belongs to the peptidase M10A family. Zn(2+) serves as cofactor. The cofactor is Ca(2+). Expressed only transiently in whole animal, at time when tadpole feeding begins.

The protein localises to the secreted. Its subcellular location is the extracellular space. It localises to the extracellular matrix. Its activity is regulated as follows. Up-regulated in the tail by thyroid hormone. Cleaves collagen type I. May play a role in larval tissue degeneration and adult organogenesis during amphibian metamorphosis. May be involved in tail resorption. This is Matrix metalloproteinase-18 (mmp18) from Xenopus laevis (African clawed frog).